Here is a 348-residue protein sequence, read N- to C-terminus: Histidinol-phosphate aminotransferase (348 aa).

K211 carries the N6-(pyridoxal phosphate)lysine modification.

This sequence belongs to the class-II pyridoxal-phosphate-dependent aminotransferase family. Histidinol-phosphate aminotransferase subfamily. In terms of assembly, homodimer. Requires pyridoxal 5'-phosphate as cofactor.

The enzyme catalyses L-histidinol phosphate + 2-oxoglutarate = 3-(imidazol-4-yl)-2-oxopropyl phosphate + L-glutamate. Its pathway is amino-acid biosynthesis; L-histidine biosynthesis; L-histidine from 5-phospho-alpha-D-ribose 1-diphosphate: step 7/9. This is Histidinol-phosphate aminotransferase from Chlorobaculum tepidum (strain ATCC 49652 / DSM 12025 / NBRC 103806 / TLS) (Chlorobium tepidum).